A 236-amino-acid chain; its full sequence is Small ribosomal subunit protein uS2c (236 aa).

This sequence belongs to the universal ribosomal protein uS2 family.

The protein resides in the plastid. Its subcellular location is the chloroplast. The chain is Small ribosomal subunit protein uS2c (rps2) from Saccharum hybrid (Sugarcane).